Reading from the N-terminus, the 430-residue chain is Enolase (430 aa).

(2R)-2-phosphoglycerate is bound at residue Gln-163. The active-site Proton donor is the Glu-205. The Mg(2+) site is built by Asp-242, Glu-288, and Asp-315. (2R)-2-phosphoglycerate contacts are provided by Lys-340, Arg-369, Ser-370, and Lys-391. The active-site Proton acceptor is the Lys-340.

Belongs to the enolase family. It depends on Mg(2+) as a cofactor.

It localises to the cytoplasm. Its subcellular location is the secreted. It is found in the cell surface. The enzyme catalyses (2R)-2-phosphoglycerate = phosphoenolpyruvate + H2O. Its pathway is carbohydrate degradation; glycolysis; pyruvate from D-glyceraldehyde 3-phosphate: step 4/5. In terms of biological role, catalyzes the reversible conversion of 2-phosphoglycerate (2-PG) into phosphoenolpyruvate (PEP). It is essential for the degradation of carbohydrates via glycolysis. The sequence is that of Enolase from Aster yellows witches'-broom phytoplasma (strain AYWB).